Reading from the N-terminus, the 321-residue chain is Acetyl-coenzyme A carboxylase carboxyl transferase subunit alpha (321 aa).

The CoA carboxyltransferase C-terminal domain maps to 32–293 (DISEEIARLQ…KRVLQDQLKE (262 aa)).

Belongs to the AccA family. As to quaternary structure, acetyl-CoA carboxylase is a heterohexamer composed of biotin carboxyl carrier protein (AccB), biotin carboxylase (AccC) and two subunits each of ACCase subunit alpha (AccA) and ACCase subunit beta (AccD).

The protein resides in the cytoplasm. It carries out the reaction N(6)-carboxybiotinyl-L-lysyl-[protein] + acetyl-CoA = N(6)-biotinyl-L-lysyl-[protein] + malonyl-CoA. The protein operates within lipid metabolism; malonyl-CoA biosynthesis; malonyl-CoA from acetyl-CoA: step 1/1. Functionally, component of the acetyl coenzyme A carboxylase (ACC) complex. First, biotin carboxylase catalyzes the carboxylation of biotin on its carrier protein (BCCP) and then the CO(2) group is transferred by the carboxyltransferase to acetyl-CoA to form malonyl-CoA. The polypeptide is Acetyl-coenzyme A carboxylase carboxyl transferase subunit alpha (Chromobacterium violaceum (strain ATCC 12472 / DSM 30191 / JCM 1249 / CCUG 213 / NBRC 12614 / NCIMB 9131 / NCTC 9757 / MK)).